Reading from the N-terminus, the 312-residue chain is DNA-directed RNA polymerase subunit alpha (312 aa).

The tract at residues 1-229 (MLQYQIDRID…ELFQPLATVT (229 aa)) is alpha N-terminal domain (alpha-NTD). Residues 240 to 312 (PSPEAQIPLE…ISIPQSRTSV (73 aa)) form an alpha C-terminal domain (alpha-CTD) region.

This sequence belongs to the RNA polymerase alpha chain family. In cyanobacteria the RNAP catalytic core is composed of 2 alpha, 1 beta, 1 beta', 1 gamma and 1 omega subunit. When a sigma factor is associated with the core the holoenzyme is formed, which can initiate transcription.

The enzyme catalyses RNA(n) + a ribonucleoside 5'-triphosphate = RNA(n+1) + diphosphate. Its function is as follows. DNA-dependent RNA polymerase catalyzes the transcription of DNA into RNA using the four ribonucleoside triphosphates as substrates. The chain is DNA-directed RNA polymerase subunit alpha from Prochlorococcus marinus (strain AS9601).